The primary structure comprises 291 residues: Elongation factor Ts (291 aa).

The interval 81 to 84 is involved in Mg(2+) ion dislocation from EF-Tu; the sequence is TDFV. The interval 271–291 is disordered; that stretch reads EGKEKKDESFADEVMAQVRDS.

Belongs to the EF-Ts family.

The protein localises to the cytoplasm. In terms of biological role, associates with the EF-Tu.GDP complex and induces the exchange of GDP to GTP. It remains bound to the aminoacyl-tRNA.EF-Tu.GTP complex up to the GTP hydrolysis stage on the ribosome. In Halorhodospira halophila (strain DSM 244 / SL1) (Ectothiorhodospira halophila (strain DSM 244 / SL1)), this protein is Elongation factor Ts.